We begin with the raw amino-acid sequence, 494 residues long: MNANELFEKIRVKQVIGTLDINVTDITTDSRTASEGSIFVASKGYTVDSHKFCQNVVDQGAKVIVVNHQQDINGDVTQVIVPDTLRVASLLAHTLYDFPSHQLTTIGVTGTNGKTSIATMIHLIYRGLGKGSAYLGTNGFQINEHKTRGANTTPETVSLTKKIKQAVDENAEAMTMEVSSHGLSLGRLRGVEFDVAIFSNLTQDHLDFHGTMEAYGHAKSLLFSQLGEDLSKEKYAVLNNDDDFSKYLASVTPYEIFTYGIDHDAQFMAKNIQESLQGVHFDFDTPIGTYSVKTPYVGKFNISNIMAAMIAVWSKGTSMEDIVRVVENLEPVEGRLEVLDPSLPIDLIIDYAHTADGMNKLIDAVKPFVKQKLIFLIGMAGERDLTKTPEMGAVACRADYVIFTPDNPANDDPKMLTAELAKGATHNHYVEFDDRAEGIKHAIDIAEPGDTVVLASKGREPYQIMPGHIKVPHRDDLIGLEAAYKKFGGGPSEH.

Ser-30 contacts UDP-N-acetyl-alpha-D-muramoyl-L-alanyl-D-glutamate. An ATP-binding site is contributed by 110 to 116; sequence GTNGKTS. Residues 152–153, Ser-179, and Arg-187 each bind UDP-N-acetyl-alpha-D-muramoyl-L-alanyl-D-glutamate; that span reads TT. Lys-219 bears the N6-carboxylysine mark. The L-lysine recognition motif motif lies at 406–409; it reads DNPA.

This sequence belongs to the MurCDEF family. MurE subfamily. Carboxylation is probably crucial for Mg(2+) binding and, consequently, for the gamma-phosphate positioning of ATP.

The protein localises to the cytoplasm. It catalyses the reaction UDP-N-acetyl-alpha-D-muramoyl-L-alanyl-D-glutamate + L-lysine + ATP = UDP-N-acetyl-alpha-D-muramoyl-L-alanyl-gamma-D-glutamyl-L-lysine + ADP + phosphate + H(+). It functions in the pathway cell wall biogenesis; peptidoglycan biosynthesis. In terms of biological role, catalyzes the addition of L-lysine to the nucleotide precursor UDP-N-acetylmuramoyl-L-alanyl-D-glutamate (UMAG) in the biosynthesis of bacterial cell-wall peptidoglycan. In Staphylococcus haemolyticus (strain JCSC1435), this protein is UDP-N-acetylmuramoyl-L-alanyl-D-glutamate--L-lysine ligase.